We begin with the raw amino-acid sequence, 358 residues long: tRNA pseudouridine synthase B (358 aa).

The interval 1 to 50 (MTTPDAAIDSKISDSNGADKNKSAADDNAFNAPGRKRHHNNQPRRDKRDV) is disordered. Residue Asp87 is the Nucleophile of the active site.

It belongs to the pseudouridine synthase TruB family. Type 1 subfamily.

The catalysed reaction is uridine(55) in tRNA = pseudouridine(55) in tRNA. Functionally, responsible for synthesis of pseudouridine from uracil-55 in the psi GC loop of transfer RNAs. In Nitrobacter winogradskyi (strain ATCC 25391 / DSM 10237 / CIP 104748 / NCIMB 11846 / Nb-255), this protein is tRNA pseudouridine synthase B.